The following is a 315-amino-acid chain: Adenine deaminase (315 aa).

The Zn(2+) site is built by H14, H16, and H194. E197 (proton donor) is an active-site residue. Position 275 (D275) interacts with Zn(2+). Substrate is bound at residue D276.

The protein belongs to the metallo-dependent hydrolases superfamily. Adenosine and AMP deaminases family. Adenine deaminase type 2 subfamily. It depends on Zn(2+) as a cofactor.

The enzyme catalyses adenine + H2O + H(+) = hypoxanthine + NH4(+). In terms of biological role, catalyzes the hydrolytic deamination of adenine to hypoxanthine. Plays an important role in the purine salvage pathway and in nitrogen catabolism. The protein is Adenine deaminase of Pseudomonas putida (strain W619).